The sequence spans 136 residues: Ribosome-binding factor A (136 aa).

This sequence belongs to the RbfA family. Monomer. Binds 30S ribosomal subunits, but not 50S ribosomal subunits or 70S ribosomes.

Its subcellular location is the cytoplasm. Its function is as follows. One of several proteins that assist in the late maturation steps of the functional core of the 30S ribosomal subunit. Associates with free 30S ribosomal subunits (but not with 30S subunits that are part of 70S ribosomes or polysomes). Required for efficient processing of 16S rRNA. May interact with the 5'-terminal helix region of 16S rRNA. This Yersinia pestis bv. Antiqua (strain Antiqua) protein is Ribosome-binding factor A.